Here is a 317-residue protein sequence, read N- to C-terminus: MIFKPQSFLKAIVLSMTITFAFNMSAPIASAYPIFAQQNYENPREANGRIVCANCHLAQKPVELEVPQAVLPDTVFEAIIQIPYDTQVKQVLANGKKGDLNVGMVLILPEGFELAPADRIPEEMKKKVGNLYYQPYSPDKKNILVVGPVPGKQYSEMVVPLLSPDPATNKNVSYLKYPIYVGGNRGRGQVYPDGSKSNNTVYNSPVSGTITEILKLEGKKGGYTISITKADGVVLTEKIPGGPEVIVKEGQAIIADQPLTNNPNVGGFGQKDVEVVLQNPVRIQGLLAFFACILLAQILLVVKKKQFEKVQLAEMNF.

A signal peptide spans 1–31 (MIFKPQSFLKAIVLSMTITFAFNMSAPIASA). 4 residues coordinate heme: Y32, C52, C55, and H56. Residues 280 to 302 (PVRIQGLLAFFACILLAQILLVV) form a helical membrane-spanning segment.

Belongs to the cytochrome f family. In terms of assembly, the 4 large subunits of the cytochrome b6-f complex are cytochrome b6, subunit IV (17 kDa polypeptide, petD), cytochrome f and the Rieske protein, while the 4 small subunits are PetG, PetL, PetM and PetN. The complex functions as a dimer. Requires heme as cofactor.

The protein localises to the plastid. Its subcellular location is the chloroplast thylakoid membrane. Its function is as follows. Component of the cytochrome b6-f complex, which mediates electron transfer between photosystem II (PSII) and photosystem I (PSI), cyclic electron flow around PSI, and state transitions. This Chlamydomonas subcaudata protein is Cytochrome f.